We begin with the raw amino-acid sequence, 455 residues long: Hexokinase-2 (455 aa).

The 443-residue stretch at 3–445 (ANFQQAVKKL…SGIGAALCAL (443 aa)) folds into the Hexokinase domain. Residues 57–195 (TGAETGDFLA…NLPIRIEAVI (139 aa)) form a hexokinase small subdomain region. 68-73 (DFGGTN) lines the ATP pocket. Residues 144–145 (SY), 161–162 (TK), and 196–197 (ND) each bind substrate. Residues 196–434 (NDTVGTLVTR…KLISIGIAKD (239 aa)) are hexokinase large subdomain. Residue Thr-222 coordinates ATP. The substrate site is built by Asn-225, Glu-252, and Glu-283. ATP is bound by residues 288–289 (GM), 325–329 (TSVLS), and 400–404 (SLVEH).

This sequence belongs to the hexokinase family. As to quaternary structure, monomer.

The catalysed reaction is a D-hexose + ATP = a D-hexose 6-phosphate + ADP + H(+). It carries out the reaction D-mannose + ATP = D-mannose 6-phosphate + ADP + H(+). It catalyses the reaction D-fructose + ATP = D-fructose 6-phosphate + ADP + H(+). The enzyme catalyses D-glucose + ATP = D-glucose 6-phosphate + ADP + H(+). Its pathway is carbohydrate metabolism; hexose metabolism. The protein operates within carbohydrate degradation; glycolysis; D-glyceraldehyde 3-phosphate and glycerone phosphate from D-glucose: step 1/4. Catalyzes the phosphorylation of hexose (six-carbon sugars) to hexose 6-phosphate. Phosphorylates D-glucose, D-fructose and D-mannose. Compared to hxk1, has a much higher affinity for D-glucose. Constitutes the initial enzyme of glycolysis by catalyzing the phosphorylation of glucose to D-glucose 6-phosphate. This chain is Hexokinase-2, found in Schizosaccharomyces pombe (strain 972 / ATCC 24843) (Fission yeast).